Reading from the N-terminus, the 671-residue chain is DNA ligase (671 aa).

Residues D31 to D35, S80 to L81, and E110 contribute to the NAD(+) site. K112 (N6-AMP-lysine intermediate) is an active-site residue. NAD(+)-binding residues include R133, E167, K283, and K307. Residues C401, C404, C419, and C424 each contribute to the Zn(2+) site. Residues E587–E671 form the BRCT domain.

The protein belongs to the NAD-dependent DNA ligase family. LigA subfamily. Mg(2+) is required as a cofactor. It depends on Mn(2+) as a cofactor.

The enzyme catalyses NAD(+) + (deoxyribonucleotide)n-3'-hydroxyl + 5'-phospho-(deoxyribonucleotide)m = (deoxyribonucleotide)n+m + AMP + beta-nicotinamide D-nucleotide.. DNA ligase that catalyzes the formation of phosphodiester linkages between 5'-phosphoryl and 3'-hydroxyl groups in double-stranded DNA using NAD as a coenzyme and as the energy source for the reaction. It is essential for DNA replication and repair of damaged DNA. This Listeria monocytogenes serotype 4a (strain HCC23) protein is DNA ligase.